Reading from the N-terminus, the 93-residue chain is Phosphoribosyl-ATP pyrophosphatase (93 aa).

This sequence belongs to the PRA-PH family.

It localises to the cytoplasm. The catalysed reaction is 1-(5-phospho-beta-D-ribosyl)-ATP + H2O = 1-(5-phospho-beta-D-ribosyl)-5'-AMP + diphosphate + H(+). Its pathway is amino-acid biosynthesis; L-histidine biosynthesis; L-histidine from 5-phospho-alpha-D-ribose 1-diphosphate: step 2/9. The polypeptide is Phosphoribosyl-ATP pyrophosphatase (Rhodococcus erythropolis (strain PR4 / NBRC 100887)).